Here is a 96-residue protein sequence, read N- to C-terminus: uncharacterized protein (96 aa).

The signal sequence occupies residues 1–15 (MRLFILLVALFVICA).

This is an uncharacterized protein from Caenorhabditis elegans.